A 247-amino-acid chain; its full sequence is Transmembrane protein 33 (247 aa).

Residue alanine 2 is modified to N-acetylalanine. The Lumenal segment spans residues 2–31 (ADTTPNGPQGAGAVQFMMTNKLDTAMWLSR). Residues 32 to 52 (LFTVYCSALFVLPLLGLHEAA) form a helical membrane-spanning segment. The Cytoplasmic portion of the chain corresponds to 53–100 (SFYQRALLANALTSALRLHQRLPHFQLSRAFLAQALLEDSCHYLLYSL). A helical membrane pass occupies residues 101–121 (IFVNSYPVTMSIFPVLLFSLL). Residues 122–155 (HAATYTKKVLDAKGSNSLPLLRSFLDKLSTNQQN) lie on the Lumenal side of the membrane. Residues 156-176 (ILKFIACNEIFLMPATVFMLF) form a helical membrane-spanning segment. At 177–247 (SGQGSLLQPF…FISRLAPTVA (71 aa)) the chain is on the cytoplasmic side.

Belongs to the PER33/POM33 family. As to quaternary structure, interacts with EIF2AK3. Interacts with RTN1, RTN2, RTN3, RTN4 and ARL6IP1. Interacts with RNF5. Interacts with RNF26. Interacts with PKD2.

Its subcellular location is the endoplasmic reticulum membrane. It localises to the melanosome. The protein resides in the nucleus envelope. Acts as a regulator of the tubular endoplasmic reticulum (ER) network by modulating intracellular calcium homeostasis. Mechanistically, stimulates PKD2 calcium-dependent activity. Suppresses the RTN3/4-induced formation of the ER tubules. Positively regulates PERK-mediated and IRE1-mediated unfolded protein response signaling. Plays an essential role in VEGF-mediated release of Ca(2+) from ER stores during angiogenesis. Also plays a role in the modulation of innate immune signaling through the cGAS-STING pathway by interacting with RNF26. Participates in lipid metabolism by acting as a downstream effector of the pyruvate kinase/PKM. Forms a complex with RNF5 to facilitate polyubiquitination and subsequent degradation of SCAP on the ER membrane. The protein is Transmembrane protein 33 (Tmem33) of Mus musculus (Mouse).